A 336-amino-acid polypeptide reads, in one-letter code: D-erythrose-4-phosphate dehydrogenase (336 aa).

11–12 (RI) provides a ligand contact to NAD(+). Residues 153–155 (SCT), R199, 212–213 (TK), and R235 each bind substrate. Catalysis depends on C154, which acts as the Nucleophile. Residue N317 participates in NAD(+) binding.

It belongs to the glyceraldehyde-3-phosphate dehydrogenase family. Epd subfamily. As to quaternary structure, homotetramer.

It is found in the cytoplasm. The enzyme catalyses D-erythrose 4-phosphate + NAD(+) + H2O = 4-phospho-D-erythronate + NADH + 2 H(+). The protein operates within cofactor biosynthesis; pyridoxine 5'-phosphate biosynthesis; pyridoxine 5'-phosphate from D-erythrose 4-phosphate: step 1/5. Its function is as follows. Catalyzes the NAD-dependent conversion of D-erythrose 4-phosphate to 4-phosphoerythronate. In Aeromonas salmonicida (strain A449), this protein is D-erythrose-4-phosphate dehydrogenase.